A 160-amino-acid chain; its full sequence is MIKHLVAPLVFTSLILTGCQSPQGKFTPEQVAAMQSYGFTESAGDWSLGLSDAILFAKNDYKLLPESQQQIQTMAAKLASTGLTHARMDGHTDNYGEDSYNEGLSLKRANVVADAWAMGGQIPRSNLTTQGLGKKYPIASNKTAQGRAENRRVAVVITTP.

The first 18 residues, 1 to 18 (MIKHLVAPLVFTSLILTG), serve as a signal peptide directing secretion. C19 carries N-palmitoyl cysteine lipidation. Residue C19 is the site of S-diacylglycerol cysteine attachment. An OmpA-like domain is found at 43–160 (AGDWSLGLSD…RRVAVVITTP (118 aa)).

It belongs to the outer membrane OOP (TC 1.B.6) superfamily.

The protein resides in the cell membrane. The protein is Putative lipoprotein YfiB (yfiB) of Escherichia coli (strain K12).